A 182-amino-acid polypeptide reads, in one-letter code: CASP-like protein 5A1 (182 aa).

Residues 1–47 (MEMASHPAVHPVALPPPYQAVGPPAPPAVRINDFPGSPGTLMGLALR) are Cytoplasmic-facing. A helical transmembrane segment spans residues 48–68 (FAQLGFALTALCIMVSIVGFS). The Extracellular segment spans residues 69 to 72 (SVTA). A helical membrane pass occupies residues 73–93 (FCFLVAAMVLQCIWSLCLGVL). Residues 94–117 (DCYALLTKRSLRNSLILSFFVVGD) lie on the Cytoplasmic side of the membrane. A helical transmembrane segment spans residues 118–138 (WITSTMTFAGACAAAGITVLI). The Extracellular portion of the chain corresponds to 139–158 (DNDLNQCGPNHCNRFEAAAA). A helical transmembrane segment spans residues 159–179 (MAFMSWVITTISFFLSFWILV). The Cytoplasmic segment spans residues 180-182 (TCR).

This sequence belongs to the Casparian strip membrane proteins (CASP) family. Homodimer and heterodimers.

Its subcellular location is the cell membrane. The chain is CASP-like protein 5A1 from Physcomitrium patens (Spreading-leaved earth moss).